We begin with the raw amino-acid sequence, 458 residues long: Tetracycline resistance protein (458 aa).

The next 12 helical transmembrane spans lie at 12-33 (HNQV…EMVL), 81-100 (LLLF…FVGH), 111-129 (FIQG…VVVA), 140-162 (AFGL…GGMV), 165-185 (YIHW…VPFL), 201-221 (MAGI…TTSY), 223-240 (FSFL…VQHI), 256-276 (VFFV…AGFV), 297-317 (GIIF…GLLV), 324-344 (YVLT…AFFI), 346-365 (AAPW…LSFT), and 432-451 (MLIL…LNVY).

Belongs to the major facilitator superfamily. TCR/Tet family.

The protein resides in the cell membrane. Functionally, resistance to tetracycline by an active tetracycline efflux. This is an energy-dependent process that decreases the accumulation of the antibiotic in whole cells. This protein functions as a metal-tetracycline/H(+) antiporter. In Bacillus subtilis (strain 168), this protein is Tetracycline resistance protein (tetB).